Consider the following 327-residue polypeptide: uncharacterized protein (327 aa).

Low complexity predominate over residues 1–17; that stretch reads MASMAAAIAASRSAVMS. Positions 1–22 are disordered; it reads MASMAAAIAASRSAVMSGNRPL. Position 2 is an N-acetylalanine (Ala2). Residue Ser37 is modified to Phosphoserine. Positions 76–113 are disordered; it reads GPRAPAPRDPGDSEELTRFPGLRGPTGQKVVRFGDEDL. A Phosphoserine modification is found at Ser129. The segment covering 134 to 148 has biased composition (polar residues); that stretch reads SISALSIQEPSNGTA. The segment at 134-299 is disordered; the sequence is SISALSIQEP…PDVRQDDGED (166 aa). Residues 162–176 show a composition bias toward low complexity; it reads SQALKSSQGSRSSSL. Ser175 is modified (phosphoserine). 2 stretches are compositionally biased toward basic and acidic residues: residues 182 to 202 and 233 to 252; these read TRKEEEASFWKINAERSRGEG and PAPKDREAKVERPSTLRQEQ. Position 289 is a phosphoserine (Ser289).

The protein localises to the cytoplasm. This is an uncharacterized protein from Homo sapiens (Human).